Reading from the N-terminus, the 396-residue chain is Putative pyridoxal phosphate-dependent acyltransferase (396 aa).

111–112 (GF) is a pyridoxal 5'-phosphate binding site. His136 contributes to the substrate binding site. Residues Ser186, 211–214 (DDAH), and 241–244 (TLSK) contribute to the pyridoxal 5'-phosphate site. Lys244 carries the N6-(pyridoxal phosphate)lysine modification. Thr358 is a binding site for substrate.

This sequence belongs to the class-II pyridoxal-phosphate-dependent aminotransferase family. Homodimer. The cofactor is pyridoxal 5'-phosphate.

In Bacillus anthracis, this protein is Putative pyridoxal phosphate-dependent acyltransferase.